The chain runs to 75 residues: DNA-directed RNA polymerase subunit Rpo6 (75 aa).

This sequence belongs to the archaeal Rpo6/eukaryotic RPB6 RNA polymerase subunit family. Part of the RNA polymerase complex.

It is found in the cytoplasm. The catalysed reaction is RNA(n) + a ribonucleoside 5'-triphosphate = RNA(n+1) + diphosphate. Its function is as follows. DNA-dependent RNA polymerase (RNAP) catalyzes the transcription of DNA into RNA using the four ribonucleoside triphosphates as substrates. This is DNA-directed RNA polymerase subunit Rpo6 from Archaeoglobus fulgidus (strain ATCC 49558 / DSM 4304 / JCM 9628 / NBRC 100126 / VC-16).